Reading from the N-terminus, the 382-residue chain is Mannosyl phosphorylinositol ceramide synthase SUR1 (382 aa).

Topologically, residues M1–K6 are cytoplasmic. Residues Y7–L27 traverse the membrane as a helical segment. The Extracellular portion of the chain corresponds to T28 to C269. A helical transmembrane segment spans residues V270–W290. Residues L291 to S382 are Cytoplasmic-facing. S349 carries the post-translational modification Phosphoserine.

It belongs to the glycosyltransferase 32 family. Heterodimer of SUR1 and CSG2.

The protein localises to the membrane. The enzyme catalyses a 1D-myo-inositol-1-phospho-N-[(R)-2-hydroxy-very-long-chain fatty acyl]-(R)-4-hydroxysphingoid base + GDP-alpha-D-mannose = an alpha-D-mannosyl-(1&lt;-&gt;6)-1D-myo-inositol-1-phospho-N-[(R)-2-hydroxy-very-long-chain fatty acyl]-(R)-4-hydroxysphingoid base + GDP + H(+). Involved in the synthesis of mannosyl phosphorylinositol ceramide. Catalyzes the addition of mannosyl to phosphorylinositol ceramide. Suppressor of RVS161 mutation. This is Mannosyl phosphorylinositol ceramide synthase SUR1 from Saccharomyces cerevisiae (strain ATCC 204508 / S288c) (Baker's yeast).